The chain runs to 172 residues: Transcriptional regulator CdrL (172 aa).

Residues 72 to 113 (SPSAVEEVRTTPASGGRADAEEPGDDGETDAEHADTSATGDE) are disordered. A DZANK-type zinc finger spans residues 116–160 (CSQCGAELSADHVYCPNCGGKATHRVFCECGDEIRADWAFCPRCG).

This sequence belongs to the CdrL family.

It is found in the cytoplasm. In terms of biological role, transcriptional regulator involved in the control of cell division. This chain is Transcriptional regulator CdrL, found in Halobacterium salinarum (strain ATCC 29341 / DSM 671 / R1).